The chain runs to 107 residues: Anti-adapter protein IraM (107 aa).

It belongs to the IraM/RssC family.

It is found in the cytoplasm. Inhibits RpoS proteolysis by regulating RssB activity, thereby increasing the stability of the sigma stress factor RpoS during magnesium starvation. The polypeptide is Anti-adapter protein IraM (Shigella dysenteriae serotype 1 (strain Sd197)).